A 155-amino-acid chain; its full sequence is Large ribosomal subunit protein eL24A (155 aa).

Serine 7 is subject to Phosphoserine. The disordered stretch occupies residues 66 to 155 (EVAKKRSRKT…AFQKVAATSR (90 aa)). Residues 89–129 (LIKERRSLKPEVRKANREEKLKANKEKKKAEKAARKAEKAK) are compositionally biased toward basic and acidic residues. The span at 131–142 (AGTQSSKFSKQQ) shows a compositional bias: polar residues.

It belongs to the eukaryotic ribosomal protein eL24 family. Component of the large ribosomal subunit (LSU). Mature yeast ribosomes consist of a small (40S) and a large (60S) subunit. The 40S small subunit contains 1 molecule of ribosomal RNA (18S rRNA) and 33 different proteins (encoded by 57 genes). The large 60S subunit contains 3 rRNA molecules (25S, 5.8S and 5S rRNA) and 46 different proteins (encoded by 81 genes).

The protein localises to the cytoplasm. Its function is as follows. Component of the ribosome, a large ribonucleoprotein complex responsible for the synthesis of proteins in the cell. The small ribosomal subunit (SSU) binds messenger RNAs (mRNAs) and translates the encoded message by selecting cognate aminoacyl-transfer RNA (tRNA) molecules. The large subunit (LSU) contains the ribosomal catalytic site termed the peptidyl transferase center (PTC), which catalyzes the formation of peptide bonds, thereby polymerizing the amino acids delivered by tRNAs into a polypeptide chain. The nascent polypeptides leave the ribosome through a tunnel in the LSU and interact with protein factors that function in enzymatic processing, targeting, and the membrane insertion of nascent chains at the exit of the ribosomal tunnel. The sequence is that of Large ribosomal subunit protein eL24A from Saccharomyces cerevisiae (strain ATCC 204508 / S288c) (Baker's yeast).